Reading from the N-terminus, the 352-residue chain is Probable dual-specificity RNA methyltransferase RlmN (352 aa).

The active-site Proton acceptor is Glu-93. The region spanning 99 to 333 (FNYGYSVCVT…IRLERGSSID (235 aa)) is the Radical SAM core domain. A disulfide bond links Cys-106 and Cys-336. Positions 113, 117, and 120 each coordinate [4Fe-4S] cluster. S-adenosyl-L-methionine is bound by residues 164 to 165 (GE), Ser-196, and Asn-295. The S-methylcysteine intermediate role is filled by Cys-336.

Belongs to the radical SAM superfamily. RlmN family. [4Fe-4S] cluster serves as cofactor.

It is found in the cytoplasm. It catalyses the reaction adenosine(2503) in 23S rRNA + 2 reduced [2Fe-2S]-[ferredoxin] + 2 S-adenosyl-L-methionine = 2-methyladenosine(2503) in 23S rRNA + 5'-deoxyadenosine + L-methionine + 2 oxidized [2Fe-2S]-[ferredoxin] + S-adenosyl-L-homocysteine. It carries out the reaction adenosine(37) in tRNA + 2 reduced [2Fe-2S]-[ferredoxin] + 2 S-adenosyl-L-methionine = 2-methyladenosine(37) in tRNA + 5'-deoxyadenosine + L-methionine + 2 oxidized [2Fe-2S]-[ferredoxin] + S-adenosyl-L-homocysteine. In terms of biological role, specifically methylates position 2 of adenine 2503 in 23S rRNA and position 2 of adenine 37 in tRNAs. This Malacoplasma penetrans (strain HF-2) (Mycoplasma penetrans) protein is Probable dual-specificity RNA methyltransferase RlmN.